The following is a 1819-amino-acid chain: MAPKAGKTKPHKSKGEKKKKEEKVLPTVIEISVETPDESQVTLKGISTDRILDVRKLLAVHVQTCHFTNFSLSHQVRGTKLKDSVDIVSLKPCHLTIVEEDYTEEQATAHIRRLLDIVACTTAFGPSKPPVSRTLPKDSEKKESGSTDGDSPTEKDAGDSNSGLSPKPKESEKKSVGACEAQSAEGAAKSDIDMCPPTRLGQFYEFFSFSYLTPPIQYIRRSVRPSKEDKGLDDLFQIDIKVSSGKPFTVVASRTGFYPPGKQQLLCHSLVELLQQISRPFDAAYDALMKAFIEHNKFGNLPYGFRANTWVVPPVVADSPSTFPSLPVEDETWGGDGGGVGRSGKYDKRKWAKEFAILAAMPCKTPEERQVRDRKAFLLHSLFVDVSVFKAVEIIKKIVENNQCSLKDPAALGFHEERIGDLIVRVARDDPDASAKLDRKSDGTQVLEISQEELAQRNLLKGITADESATVHDTSTLGVVVVRHCGCTAIVKVASEFKLNDGHILQDIDIEDQSEGGANALNVNSLRTLLHKSSTPSSLAQRSPNADSEQIRVAKSLVRKVIEDSLKKLEIEPSRYSKPIRWELGACWVQHLQNQASSKSESKKTEDPKPEPAVKGLGKQGALLKEIKRKIDVKANKTEQGKEAPANDTDNTSETEDQKELEKQNEEIEKMWKELVTETAYQRLKESETGFHLKSPKELIEMARKYYTDTALPKLVADFGSLELSPVDGRTLTDFMHTRGLQMHSLGRVVELAEKLPHVQSLCVHEMIVRAYKHILQAVVAAVENTADVATSIATCLNVLLGTPSDTESVYDEKIKWTWVETFISKRFGWDWKHEGCQELRKFSILRGLSHKVGLELVPKDYEMDTSYPFKKFDIISMVPVYKHVACSSADGRTLLESSKTSLDKGKLEDAVNYGTKALAKLVAVCGPYHRMTAGAYSLLAVVLYHTGDFNQATIYQQKALDINERELGLDHPDTMKSYGDLAVFYYRLQHTELALKYVNRALYLLHLTCGPSHPNTAATYINVAMMEEGMKNAHVALRYLHEALKCNQRLLGADHIQTAASYHAIAIALSLMDAYSLSVQHEQTTLQILQAKLGPEDLRTQDAAAWLEYFESKALEQQEAARNGTPKPDASISSKGHLSVSDLLDYITPDSGIKARDAQRKARPKVKGKPGQSPGPVSEENQKDDEILSPAHLTGESSSDKENKSETKSEEKKVENFDLEQSKPQDQLKLVKPEATVHEDDDSDEGWQEAVPKNRFSSGRRTRPSLAKLNTNFMNVTQQPSRSRGKSTNFTSPRTSSNELSISVAGSTSSPASKMFVKSPLNKKQNNSSVVGERPVNDKSALASSACTEQINKPTPMLSPVSVKAGKLFSYKEVALAPPGTIVKIVAEQLPEETKAPQNLDAAKIAVDGPEKVNAQDAESENKHVATETEAENTDCNEQGRVVVGGSELTSSPKEIKNVEVEKAAEKAFPIETAVSNARPGKSKSAQMAEDSDTCLLNKSPTANDSNGSESVIGVKLQKDLCDAELKTVDGETENLPNGDSSPKSSVAADGEKQDACEAQKEMSKKLSASAPPYTPTTIPIFGSIAVPGFKDHGGILPSPLNMPPMLPINHVRRSTPHQSVTARVPYGPRLSGGGYNRSGNRVPRNKPSFPNSTESNGEANQFNGPRIMNPHAAEFIPSQPWVSNGYPVSPNGYLASPNGAEITQNGYPLSPVAGGYPCNMSVTQPQDGLVSEELPGAGSSEEKSGSEEESNNDKNAGEDDEAVGQETTDTPENGHSTVGEVETTSHETCDEKNGERQGGKCWGDYSDNEIEQIEVTS.

Residues 1–17 are compositionally biased toward basic residues; sequence MAPKAGKTKPHKSKGEK. Disordered regions lie at residues 1–23, 128–180, 595–619, and 634–664; these read MAPK…KEEK, KPPV…GACE, QASS…GLGK, and KANK…LEKQ. Composition is skewed to basic and acidic residues over residues 135–145 and 600–612; these read LPKDSEKKESG and SESK…KPEP. One can recognise a Clu domain in the interval 329–603; sequence EDETWGGDGG…NQASSKSESK (275 aa). The stretch at 649 to 680 forms a coiled coil; sequence TDNTSETEDQKELEKQNEEIEKMWKELVTETA. TPR repeat units lie at residues 892 to 925, 934 to 967, 976 to 1009, 1018 to 1051, and 1060 to 1093; these read GRTL…LVAV, AGAY…NERE, MKSY…LHLT, AATY…NQRL, and AASY…LQAK. Disordered regions lie at residues 1152–1360, 1413–1456, 1468–1513, 1527–1573, 1616–1670, and 1731–1809; these read SGIK…PMLS, KVNA…SPKE, KAFP…SESV, LKTV…ASAP, STPH…PRIM, and LVSE…DYSD. Composition is skewed to basic and acidic residues over residues 1199-1224 and 1230-1239; these read SSDK…EQSK and KLVKPEATVH. Phosphoserine is present on serine 1244. Residues 1269–1313 show a composition bias toward polar residues; it reads KLNTNFMNVTQQPSRSRGKSTNFTSPRTSSNELSISVAGSTSSPA. At serine 1320 the chain carries Phosphoserine. Over residues 1343–1354 the composition is skewed to polar residues; it reads LASSACTEQINK. 2 stretches are compositionally biased toward polar residues: residues 1496 to 1511 and 1536 to 1546; these read CLLN…NGSE and NLPNGDSSPKS. Basic and acidic residues predominate over residues 1551 to 1566; that stretch reads DGEKQDACEAQKEMSK. A compositionally biased stretch (polar residues) spans 1650 to 1665; sequence SFPNSTESNGEANQFN. Positions 1742 to 1759 are enriched in basic and acidic residues; it reads SEEKSGSEEESNNDKNAG. The segment covering 1767–1778 has biased composition (polar residues); that stretch reads QETTDTPENGHS. Over residues 1785–1800 the composition is skewed to basic and acidic residues; sequence TTSHETCDEKNGERQG.

Expressed in the non-epidermal tissues of the true leaves. Not detected in the vegetative shoot meristem and leaf primordia.

Its subcellular location is the nucleus. The protein localises to the cytoplasm. It localises to the cytosol. Its function is as follows. Negatively regulates meristematic tissue proliferation by integrating developmental signals with carbon source availability. May act as the scaffold of a protein complex, which sequesters key factors that are required for the G2 to M transition in meristematic tissues. Together with REC2, REC3 and FMT/CLU, contributes to the establishment of the cellular volume devoted to the chloroplast compartment. In Arabidopsis thaliana (Mouse-ear cress), this protein is Protein REDUCED CHLOROPLAST COVERAGE 2.